The sequence spans 109 residues: Large ribosomal subunit protein uL22 (109 aa).

The protein belongs to the universal ribosomal protein uL22 family. In terms of assembly, part of the 50S ribosomal subunit.

Functionally, this protein binds specifically to 23S rRNA; its binding is stimulated by other ribosomal proteins, e.g. L4, L17, and L20. It is important during the early stages of 50S assembly. It makes multiple contacts with different domains of the 23S rRNA in the assembled 50S subunit and ribosome. Its function is as follows. The globular domain of the protein is located near the polypeptide exit tunnel on the outside of the subunit, while an extended beta-hairpin is found that lines the wall of the exit tunnel in the center of the 70S ribosome. This is Large ribosomal subunit protein uL22 from Methylobacillus flagellatus (strain ATCC 51484 / DSM 6875 / VKM B-1610 / KT).